Consider the following 181-residue polypeptide: Putative NAD(P)H-dependent FMN-containing oxidoreductase YwqN (181 aa).

The protein belongs to the SsuE family. FMN serves as cofactor.

Its function is as follows. Putative NADPH-dependent oxidoreductase. The protein is Putative NAD(P)H-dependent FMN-containing oxidoreductase YwqN (ywqN) of Bacillus subtilis (strain 168).